The sequence spans 448 residues: MREVLSIHIGQAGIQVGNACWELYCLEHGINPDGSIIQDFNKKKNDDAFSTFFSETSTGKRVPRCVFLDLESGVIDEVKNGRYKNLYHPEQLICGNEDAANNYARGHYTIGKEIIEIALDRIRKLVENCSGLQGFLIFNSVGGGTGSGLGSLLLERLSLDYGKKSKLGFTVYPSPQVSTAVVEPYNSVLATHSLLEHTDVAVVLDNEAIYEICQRSLNIERPTYTNLNRLIAQVISSITASLRFDGALNVDITEFQTNLVPYPRIHFMLSSLAPVISLEMANHEQYSTAEITNAAFEPNSMMAKCDPRRGKYMACCLMFRGDVAPKDVNGSVAAIKTKKTIQFVDWCPTGFKCGINYQPPTVVPDGDLAKVDRAVCMISNSTAISEVFSRINKKFDLMYSKRAFVHWYVGEGMEEGEFNEAREDMAALEKDYEEVGSESQDLISNSFF.

Residues glutamine 11, glutamate 71, serine 140, glycine 144, threonine 145, threonine 179, asparagine 206, and asparagine 228 each coordinate GTP. A Mg(2+)-binding site is contributed by glutamate 71. Glutamate 254 is a catalytic residue.

The protein belongs to the tubulin family. In terms of assembly, dimer of alpha and beta chains. A typical microtubule is a hollow water-filled tube with an outer diameter of 25 nm and an inner diameter of 15 nM. Alpha-beta heterodimers associate head-to-tail to form protofilaments running lengthwise along the microtubule wall with the beta-tubulin subunit facing the microtubule plus end conferring a structural polarity. Microtubules usually have 13 protofilaments but different protofilament numbers can be found in some organisms and specialized cells. It depends on Mg(2+) as a cofactor.

The enzyme catalyses GTP + H2O = GDP + phosphate + H(+). Functionally, tubulin is the major constituent of microtubules, a cylinder consisting of laterally associated linear protofilaments composed of alpha- and beta-tubulin heterodimers. Microtubules grow by the addition of GTP-tubulin dimers to the microtubule end, where a stabilizing cap forms. Below the cap, tubulin dimers are in GDP-bound state, owing to GTPase activity of alpha-tubulin. The chain is Tubulin alpha chain, nucleomorph (tubA) from Guillardia theta (Cryptophyte).